Reading from the N-terminus, the 532-residue chain is Membrane protein insertase YidC (532 aa).

5 helical membrane passes run Phe7–Met27, Leu336–Ile356, Gly413–Ile433, Leu450–Ile470, and Pro492–Ile512.

It belongs to the OXA1/ALB3/YidC family. Type 1 subfamily. Interacts with the Sec translocase complex via SecD. Specifically interacts with transmembrane segments of nascent integral membrane proteins during membrane integration.

Its subcellular location is the cell membrane. Required for the insertion and/or proper folding and/or complex formation of integral membrane proteins into the membrane. Involved in integration of membrane proteins that insert both dependently and independently of the Sec translocase complex, as well as at least some lipoproteins. Aids folding of multispanning membrane proteins. The polypeptide is Membrane protein insertase YidC (Buchnera aphidicola subsp. Acyrthosiphon pisum (strain Tuc7)).